A 142-amino-acid chain; its full sequence is Large ribosomal subunit protein uL13 (142 aa).

It belongs to the universal ribosomal protein uL13 family. As to quaternary structure, part of the 50S ribosomal subunit.

This protein is one of the early assembly proteins of the 50S ribosomal subunit, although it is not seen to bind rRNA by itself. It is important during the early stages of 50S assembly. The chain is Large ribosomal subunit protein uL13 from Citrifermentans bemidjiense (strain ATCC BAA-1014 / DSM 16622 / JCM 12645 / Bem) (Geobacter bemidjiensis).